A 324-amino-acid chain; its full sequence is Phospho-N-acetylmuramoyl-pentapeptide-transferase (324 aa).

Transmembrane regions (helical) follow at residues 5-25 (VILF…PILI), 50-70 (GTPT…TIVM), 77-97 (ISPE…LGFL), 117-137 (LIGQ…YNFA), 147-167 (LSFD…VGGS), 176-196 (LDGL…ILAW), 203-223 (VAIF…FNAH), 227-247 (VFMG…IAIL), 250-270 (LEIL…SVIL), and 302-322 (VVVT…YIEV).

It belongs to the glycosyltransferase 4 family. MraY subfamily. Mg(2+) serves as cofactor.

It is found in the cell membrane. The catalysed reaction is UDP-N-acetyl-alpha-D-muramoyl-L-alanyl-gamma-D-glutamyl-meso-2,6-diaminopimeloyl-D-alanyl-D-alanine + di-trans,octa-cis-undecaprenyl phosphate = di-trans,octa-cis-undecaprenyl diphospho-N-acetyl-alpha-D-muramoyl-L-alanyl-D-glutamyl-meso-2,6-diaminopimeloyl-D-alanyl-D-alanine + UMP. Its pathway is cell wall biogenesis; peptidoglycan biosynthesis. In terms of biological role, catalyzes the initial step of the lipid cycle reactions in the biosynthesis of the cell wall peptidoglycan: transfers peptidoglycan precursor phospho-MurNAc-pentapeptide from UDP-MurNAc-pentapeptide onto the lipid carrier undecaprenyl phosphate, yielding undecaprenyl-pyrophosphoryl-MurNAc-pentapeptide, known as lipid I. The polypeptide is Phospho-N-acetylmuramoyl-pentapeptide-transferase (Bacillus subtilis (strain 168)).